We begin with the raw amino-acid sequence, 109 residues long: MFGKGGLGNLMKQAQQMQERMQKMQEEIAQLEVTGESGAGLVKVTINGAHNCRRIEIDASLMEDDKEMVEDLVAAAFNDAVRRAEDLQKEKMASVTSGMQLPPGMKLPF.

Belongs to the YbaB/EbfC family. In terms of assembly, homodimer.

Its subcellular location is the cytoplasm. The protein resides in the nucleoid. Binds to DNA and alters its conformation. May be involved in regulation of gene expression, nucleoid organization and DNA protection. The polypeptide is Nucleoid-associated protein HD_0326 (Haemophilus ducreyi (strain 35000HP / ATCC 700724)).